The chain runs to 357 residues: F-box only protein 25 (357 aa).

The segment at 1–83 (MPFLGQDWRS…NDTNTQCFYR (83 aa)) is interaction with beta-actin. In terms of domain architecture, F-box spans 225-273 (LTLSDLPVHMLSNILYRFSDGWDIVTLGQVTPTLSALSEDRQLWKKLCQ).

In terms of assembly, part of a SCF (SKP1-cullin-F-box) protein ligase complex consisting of FBXO25, SKP1, CUL1 and RBX1. Interacts directly with SKP1 and CUL1. Interacts (via C-terminus) with beta-actin (via N-terminus).

Its subcellular location is the nucleus. Its pathway is protein modification; protein ubiquitination. Substrate-recognition component of the SCF (SKP1-CUL1-F-box protein)-type E3 ubiquitin ligase complex. May play a role in accumulation of expanded polyglutamine (polyQ) protein huntingtin (HTT). The chain is F-box only protein 25 (FBXO25) from Bos taurus (Bovine).